The sequence spans 615 residues: Mitogen-activated protein kinase 18 (615 aa).

The Protein kinase domain maps to 25 to 316 (YRILEVIGKG…PAEALADPYF (292 aa)). Residues 31 to 39 (IGKGSYGVV) and Lys54 each bind ATP. Catalysis depends on Asp151, which acts as the Proton acceptor. Phosphothreonine is present on Thr187. The TXY signature appears at 187–189 (TDY). Tyr189 carries the post-translational modification Phosphotyrosine. The residue at position 192 (Thr192) is a Phosphothreonine. Disordered stretches follow at residues 414 to 483 (RSTV…ESSV) and 510 to 544 (NTMTNPENRNIEASSFPPKPQNPVHQFSPTEPPAA). Low complexity predominate over residues 415 to 426 (STVHSTVVHSTS). Over residues 445 to 459 (NGASSAGHPSTSAYP) the composition is skewed to polar residues. The segment covering 464-473 (GPPPRVPPSG) has biased composition (pro residues). 2 stretches are compositionally biased toward polar residues: residues 510-522 (NTMTNPENRNIEA) and 532-544 (PVHQFSPTEPPAA).

It belongs to the protein kinase superfamily. CMGC Ser/Thr protein kinase family. MAP kinase subfamily. In terms of assembly, interacts with PHS1. Binds to MAPKKK20. Post-translationally, dually phosphorylated on Thr-187 and Tyr-189, which activates the enzyme. Phosphorylated by MAPKKK20. Expressed in roots, seedlings, leaves, flower buds, flowers and siliques.

It is found in the nucleus. The protein resides in the cytoplasm. It catalyses the reaction L-seryl-[protein] + ATP = O-phospho-L-seryl-[protein] + ADP + H(+). The catalysed reaction is L-threonyl-[protein] + ATP = O-phospho-L-threonyl-[protein] + ADP + H(+). Activated by threonine and tyrosine phosphorylation. Inactivated by phosphatase PHS1. Functionally, mitogen-activated protein kinase (MAPK) that is specifically regulated by PHS1 and MAPKKK20 and mediates signaling that regulates cortical microtubule functions, maybe through regulation of microtubule dynamic instability. This is Mitogen-activated protein kinase 18 from Arabidopsis thaliana (Mouse-ear cress).